A 242-amino-acid chain; its full sequence is Biosynthetic peptidoglycan transglycosylase (242 aa).

A helical transmembrane segment spans residues 19 to 39 (ILAALAVFWGGGIALFSVVPV).

The protein belongs to the glycosyltransferase 51 family.

It localises to the cell inner membrane. It carries out the reaction [GlcNAc-(1-&gt;4)-Mur2Ac(oyl-L-Ala-gamma-D-Glu-L-Lys-D-Ala-D-Ala)](n)-di-trans,octa-cis-undecaprenyl diphosphate + beta-D-GlcNAc-(1-&gt;4)-Mur2Ac(oyl-L-Ala-gamma-D-Glu-L-Lys-D-Ala-D-Ala)-di-trans,octa-cis-undecaprenyl diphosphate = [GlcNAc-(1-&gt;4)-Mur2Ac(oyl-L-Ala-gamma-D-Glu-L-Lys-D-Ala-D-Ala)](n+1)-di-trans,octa-cis-undecaprenyl diphosphate + di-trans,octa-cis-undecaprenyl diphosphate + H(+). It participates in cell wall biogenesis; peptidoglycan biosynthesis. In terms of biological role, peptidoglycan polymerase that catalyzes glycan chain elongation from lipid-linked precursors. This Salmonella choleraesuis (strain SC-B67) protein is Biosynthetic peptidoglycan transglycosylase.